A 422-amino-acid chain; its full sequence is S100P-binding protein (422 aa).

Disordered regions lie at residues 1-28 (MMCS…SWSS), 61-135 (LKDD…TPAK), and 170-292 (YVSE…DSGK). Residues 80–90 (DDSRNVEKGEK) are compositionally biased toward basic and acidic residues. A Phosphoserine modification is found at serine 195. A compositionally biased stretch (basic and acidic residues) spans 231-241 (VSDKNMSDSKK). Over residues 255–269 (TPNTGSSRRNGSYKS) the composition is skewed to polar residues. Residues 274–283 (KLPVSSSSSK) are compositionally biased toward low complexity.

As to quaternary structure, interacts with S100P.

It localises to the nucleus. In Bos taurus (Bovine), this protein is S100P-binding protein.